Consider the following 388-residue polypeptide: AdoMet-dependent heme synthase (388 aa).

Residues 1–12 (MHNANHPHGNGH) are compositionally biased toward low complexity. The disordered stretch occupies residues 1-29 (MHNANHPHGNGHPAEKKGMGAHSGAMNMP). The Radical SAM core domain occupies 34–257 (DGSPACRLIA…TSMHLKATCA (224 aa)). Residues cysteine 50, cysteine 54, and cysteine 57 each coordinate [4Fe-4S] cluster.

This sequence belongs to the radical SAM superfamily. The cofactor is [4Fe-4S] cluster.

It catalyses the reaction Fe-coproporphyrin III + 2 S-adenosyl-L-methionine = heme b + 2 5'-deoxyadenosine + 2 L-methionine + 2 CO2. It functions in the pathway porphyrin-containing compound metabolism; protoheme biosynthesis. Its function is as follows. Involved in siroheme-dependent heme b biosynthesis. Catalyzes the conversion of Fe-coproporphyrin III into heme by the oxidative decarboxylation of two propionate side chains. The polypeptide is AdoMet-dependent heme synthase (Oleidesulfovibrio alaskensis (strain ATCC BAA-1058 / DSM 17464 / G20) (Desulfovibrio alaskensis)).